A 316-amino-acid chain; its full sequence is Thymidylate synthase (316 aa).

Residues Arg-23 and 178–179 (RR) each bind dUMP. Residue Cys-198 is the Nucleophile of the active site. Residues 218–221 (RSGD), Asn-229, and 259–261 (HIY) contribute to the dUMP site. Residue Asp-221 coordinates (6R)-5,10-methylene-5,6,7,8-tetrahydrofolate. Ala-315 serves as a coordination point for (6R)-5,10-methylene-5,6,7,8-tetrahydrofolate.

It belongs to the thymidylate synthase family. Bacterial-type ThyA subfamily. Homodimer.

It is found in the cytoplasm. The catalysed reaction is dUMP + (6R)-5,10-methylene-5,6,7,8-tetrahydrofolate = 7,8-dihydrofolate + dTMP. The protein operates within pyrimidine metabolism; dTTP biosynthesis. Functionally, catalyzes the reductive methylation of 2'-deoxyuridine-5'-monophosphate (dUMP) to 2'-deoxythymidine-5'-monophosphate (dTMP) while utilizing 5,10-methylenetetrahydrofolate (mTHF) as the methyl donor and reductant in the reaction, yielding dihydrofolate (DHF) as a by-product. This enzymatic reaction provides an intracellular de novo source of dTMP, an essential precursor for DNA biosynthesis. The polypeptide is Thymidylate synthase (Latilactobacillus sakei subsp. sakei (strain 23K) (Lactobacillus sakei subsp. sakei)).